We begin with the raw amino-acid sequence, 779 residues long: Protocadherin beta-8 (779 aa).

The signal sequence occupies residues 1 to 28; that stretch reads METALTKTPEKRQVIFLAILLLLWEASS. The Extracellular segment spans residues 29 to 690; it reads EAISYSMPEE…QEEDMLTLYL (662 aa). Cadherin domains lie at 75 to 133, 134 to 242, 243 to 346, 347 to 450, and 451 to 560; these read LQLD…FPEF, PDTE…APQF, LQSL…APKL, TISS…APAF, and TQTS…APFV. A disulfide bridge connects residues Cys-96 and Cys-102. A glycan (N-linked (GlcNAc...) asparagine) is linked at Asn-169. Ser-223 carries O-linked (Man) serine glycosylation. 2 O-linked (Man) threonine glycosylation sites follow: Thr-225 and Thr-227. N-linked (GlcNAc...) asparagine glycosylation is present at Asn-417. Asn-566 is a glycosylation site (N-linked (GlcNAc...) asparagine). One can recognise a Cadherin 6 domain in the interval 575–675; it reads LPRAAEPGYL…SQPYLPLPEV (101 aa). Residues 691–711 traverse the membrane as a helical segment; it reads VIALASVSSLFLLSVLLFVGV. Topologically, residues 712–779 are cytoplasmic; that stretch reads KLCKKAREAS…IIPSSLLQDS (68 aa).

In terms of assembly, forms homodimers in trans (molecules expressed by two different cells). Forms promiscuous heterodimers in cis (at the plasma membrane of the same cell) with other protocadherins.

It is found in the cell membrane. Functionally, calcium-dependent cell-adhesion protein involved in cells self-recognition and non-self discrimination. Thereby, it is involved in the establishment and maintenance of specific neuronal connections in the brain. This chain is Protocadherin beta-8, found in Mus musculus (Mouse).